Here is a 151-residue protein sequence, read N- to C-terminus: Group 10 secretory phospholipase A2 (151 aa).

An N-terminal signal peptide occupies residues 1 to 17; it reads MLLLLLLLLLGPGSCLS. The propeptide occupies 18 to 28; sequence EATRRSHVYKR. 8 cysteine pairs are disulfide-bonded: C39/C97, C53/C143, C55/C71, C70/C125, C76/C150, C77/C118, C86/C111, and C104/C116. Ca(2+)-binding residues include Y54, G56, and G58. The active site involves H74. D75 provides a ligand contact to Ca(2+). D119 is an active-site residue.

It belongs to the phospholipase A2 family. As to quaternary structure, interacts with PLA2R1; this interaction mediates PLA2G10 clearance and inactivation. The cofactor is Ca(2+).

It localises to the secreted. The protein resides in the lysosome. It is found in the cytoplasmic vesicle. Its subcellular location is the secretory vesicle. The protein localises to the acrosome. It carries out the reaction a 1,2-diacyl-sn-glycero-3-phosphocholine + H2O = a 1-acyl-sn-glycero-3-phosphocholine + a fatty acid + H(+). The catalysed reaction is 1-hexadecanoyl-2-(9Z-octadecenoyl)-sn-glycero-3-phosphocholine + H2O = 1-hexadecanoyl-sn-glycero-3-phosphocholine + (9Z)-octadecenoate + H(+). The enzyme catalyses 1-octadecanoyl-2-(5Z,8Z,11Z,14Z-eicosatetraenoyl)-sn-glycero-3-phosphocholine + H2O = 1-octadecanoyl-sn-glycero-3-phosphocholine + (5Z,8Z,11Z,14Z)-eicosatetraenoate + H(+). It catalyses the reaction 1,2-dihexadecanoyl-sn-glycero-3-phosphocholine + H2O = 1-hexadecanoyl-sn-glycero-3-phosphocholine + hexadecanoate + H(+). It carries out the reaction 1-hexadecanoyl-2-(9Z-octadecenoyl)-sn-glycero-3-phosphoglycerol + H2O = 1-hexadecanoyl-sn-glycero-3-phosphoglycerol + (9Z)-octadecenoate + H(+). The catalysed reaction is 1,2-dihexadecanoyl-sn-glycero-3-phospho-(1'-sn-glycerol) + H2O = 1-hexadecanoyl-sn-glycero-3-phospho-(1'-sn-glycerol) + hexadecanoate + H(+). The enzyme catalyses 1-hexadecanoyl-2-(9Z-octadecenoyl)-sn-glycero-3-phospho-L-serine + H2O = 1-hexadecanoyl-sn-glycero-3-phospho-L-serine + (9Z)-octadecenoate + H(+). It catalyses the reaction 1-hexadecanoyl-2-(9Z,12Z-octadecadienoyl)-sn-glycero-3-phosphoethanolamine + H2O = 1-hexadecanoyl-sn-glycero-3-phosphoethanolamine + (9Z,12Z)-octadecadienoate + H(+). It carries out the reaction 1-hexadecanoyl-2-(9Z-octadecenoyl)-sn-glycero-3-phosphate + H2O = 1-hexadecanoyl-sn-glycero-3-phosphate + (9Z)-octadecenoate + H(+). The catalysed reaction is 1-O-hexadecyl-2-acetyl-sn-glycero-3-phosphocholine + H2O = 1-O-hexadecyl-sn-glycero-3-phosphocholine + acetate + H(+). In terms of biological role, secretory calcium-dependent phospholipase A2 that primarily targets extracellular phospholipids. Hydrolyzes the ester bond of the fatty acyl group attached at sn-2 position of phospholipids with preference for phosphatidylcholines and phosphatidylglycerols over phosphatidylethanolamines. Preferentially releases sn-2 omega-6 and omega-3 polyunsaturated fatty acyl (PUFA) chains over saturated fatty acyls. Contributes to phospholipid remodeling of very low-density lipoprotein (VLDL), low-density lipoprotein (LDL) and high-density lipoprotein (HDL) particles. Hydrolyzes LDL phospholipids releasing unsaturated fatty acids that regulate macrophage differentiation toward foam cells. Efficiently hydrolyzes and inactivates platelet activating factor (PAF), a potent lipid mediator present in oxidized LDL. May act in an autocrine and paracrine manner. Secreted by lung epithelium, targets membrane phospholipids of infiltrating eosinophils, releasing arachidonate and boosting eicosanoid and cysteinyl leukotriene synthesis involved in airway inflammatory response. Secreted by gut epithelium, hydrolyzes dietary and biliary phosphatidylcholines in the gastrointestinal lumen. Plays a stem cell regulator role in colon epithelium. Within intracellular compartment, mediates Paneth-like cell differentiation and its stem cell supporting functions by inhibiting the Wnt signaling pathway in intestinal stem cell (ISC). Secreted in the intestinal lumen upon inflammation, acts in an autocrine way and promotes prostaglandin E2 synthesis that stimulates Wnt signaling pathway in ISCs and tissue regeneration. May participate in hair follicle morphogenesis by regulating phosphatidylethanolamines metabolism at the outermost epithelial layer and facilitating melanin synthesis. By releasing lysophosphatidylcholines (LPCs) at sperm acrosome, controls sperm cell capacitation, acrosome reaction and overall fertility. May promote neurite outgrowth in neuron fibers involved in nociception. Contributes to lipid remodeling of cellular membranes and generation of lipid mediators involved in pathogen clearance. Cleaves sn-2 fatty acyl chains of phosphatidylglycerols and phosphatidylethanolamines, which are major components of membrane phospholipids in bacteria. Displays bactericidal activity against Gram-positive bacteria by directly hydrolyzing phospholipids of the bacterial membrane. In pulmonary epithelium, may contribute to host defense response against adenoviral infection. Prevents adenovirus entry into host cells by hydrolyzing host cell plasma membrane, releasing C16:0 LPCs that inhibit virus-mediated membrane fusion and viral infection. Likely prevents adenoviral entry into the endosomes of host cells. May play a role in maturation and activation of innate immune cells including macrophages, group 2 innate lymphoid cells and mast cells. This is Group 10 secretory phospholipase A2 (Pla2g10) from Rattus norvegicus (Rat).